We begin with the raw amino-acid sequence, 136 residues long: Galectin-7 (136 aa).

The Galectin domain occupies 6-136 (HKSSLPEGIR…DVQLDSVRIF (131 aa)). 70–76 (WGREERG) lines the a beta-D-galactoside pocket.

Monomer. Mainly expressed in stratified squamous epithelium.

It is found in the cytoplasm. The protein resides in the nucleus. The protein localises to the secreted. Functionally, could be involved in cell-cell and/or cell-matrix interactions necessary for normal growth control. Pro-apoptotic protein that functions intracellularly upstream of JNK activation and cytochrome c release. This Homo sapiens (Human) protein is Galectin-7 (LGALS7).